Consider the following 387-residue polypeptide: Sulfoacetaldehyde reductase (387 aa).

The protein belongs to the iron-containing alcohol dehydrogenase family.

It carries out the reaction 2-hydroxyethane-1-sulfonate + NAD(+) = sulfoacetaldehyde + NADH + H(+). The protein operates within organosulfur degradation; alkanesulfonate degradation. Its function is as follows. Involved in an anaerobic respiration pathway that converts the sulfonate taurine (2-aminoethanesulfonate) to ammonia, acetate and sulfide. Catalyzes the NADH-dependent reduction of sulfoacetaldehyde to 2-hydroxyethane-1-sulfonate (isethionate). Does not accept acetaldehyde as a substrate. The protein is Sulfoacetaldehyde reductase of Bilophila wadsworthia (strain 3_1_6).